The chain runs to 376 residues: 23S rRNA (uracil(747)-C(5))-methyltransferase RlmC (376 aa).

[4Fe-4S] cluster-binding residues include cysteine 3, cysteine 11, cysteine 14, and cysteine 87. Positions 212, 241, 262, and 307 each coordinate S-adenosyl-L-methionine. Cysteine 334 acts as the Nucleophile in catalysis.

Belongs to the class I-like SAM-binding methyltransferase superfamily. RNA M5U methyltransferase family. RlmC subfamily.

The enzyme catalyses uridine(747) in 23S rRNA + S-adenosyl-L-methionine = 5-methyluridine(747) in 23S rRNA + S-adenosyl-L-homocysteine + H(+). In terms of biological role, catalyzes the formation of 5-methyl-uridine at position 747 (m5U747) in 23S rRNA. The chain is 23S rRNA (uracil(747)-C(5))-methyltransferase RlmC from Yersinia pseudotuberculosis serotype I (strain IP32953).